Reading from the N-terminus, the 446-residue chain is O-antigen polymerase (446 aa).

11 helical membrane-spanning segments follow: residues 11–31 (ICSY…VINE), 33–53 (FCEI…VIII), 58–78 (QGGF…FILI), 104–124 (IYVF…VLLY), 147–167 (QLSM…IKSY), 186–206 (LYDE…SLLF), 211–231 (NFIL…LVGL), 252–272 (LKIK…SLFL), 355–375 (IYLG…SLAF), 391–411 (KLAY…IYFA), and 415–435 (LFDF…LSIV).

Its subcellular location is the cell inner membrane. It catalyses the reaction n lipid-linked O-antigen repeat units = a lipid-linked O antigen + (n-1) polyisoprenyl diphosphate.. The protein operates within bacterial outer membrane biogenesis; LPS O-antigen biosynthesis. Polymerase involved in the biosynthesis of the lipopolysaccharide (LPS). Catalyzes the polymerization of the O-antigen repeat units on the periplasmic face of the inner membrane, leading to the formation of the lipid-linked O-antigen molecule. In vitro, shows a preference for bacteria-based, undecaprenyl-containing substrates rather than eukaryote-based, dolichol-containing substrates. The sequence is that of O-antigen polymerase from Escherichia coli.